Here is a 619-residue protein sequence, read N- to C-terminus: Dihydroxy-acid dehydratase 1 (619 aa).

Aspartate 81 is a binding site for Mg(2+). Cysteine 122 provides a ligand contact to [2Fe-2S] cluster. Mg(2+)-binding residues include aspartate 123 and lysine 124. Lysine 124 carries the post-translational modification N6-carboxylysine. Cysteine 198 contacts [2Fe-2S] cluster. Glutamate 494 provides a ligand contact to Mg(2+). Serine 520 functions as the Proton acceptor in the catalytic mechanism.

It belongs to the IlvD/Edd family. In terms of assembly, homodimer. The cofactor is [2Fe-2S] cluster. Mg(2+) serves as cofactor.

It catalyses the reaction (2R)-2,3-dihydroxy-3-methylbutanoate = 3-methyl-2-oxobutanoate + H2O. It carries out the reaction (2R,3R)-2,3-dihydroxy-3-methylpentanoate = (S)-3-methyl-2-oxopentanoate + H2O. It participates in amino-acid biosynthesis; L-isoleucine biosynthesis; L-isoleucine from 2-oxobutanoate: step 3/4. It functions in the pathway amino-acid biosynthesis; L-valine biosynthesis; L-valine from pyruvate: step 3/4. In terms of biological role, functions in the biosynthesis of branched-chain amino acids. Catalyzes the dehydration of (2R,3R)-2,3-dihydroxy-3-methylpentanoate (2,3-dihydroxy-3-methylvalerate) into 2-oxo-3-methylpentanoate (2-oxo-3-methylvalerate) and of (2R)-2,3-dihydroxy-3-methylbutanoate (2,3-dihydroxyisovalerate) into 2-oxo-3-methylbutanoate (2-oxoisovalerate), the penultimate precursor to L-isoleucine and L-valine, respectively. This Bordetella bronchiseptica (strain ATCC BAA-588 / NCTC 13252 / RB50) (Alcaligenes bronchisepticus) protein is Dihydroxy-acid dehydratase 1.